Consider the following 137-residue polypeptide: Large ribosomal subunit protein uL16 (137 aa).

Belongs to the universal ribosomal protein uL16 family. Part of the 50S ribosomal subunit.

In terms of biological role, binds 23S rRNA and is also seen to make contacts with the A and possibly P site tRNAs. The protein is Large ribosomal subunit protein uL16 of Bartonella tribocorum (strain CIP 105476 / IBS 506).